A 352-amino-acid chain; its full sequence is Ribosomal RNA large subunit methyltransferase M (352 aa).

S-adenosyl-L-methionine is bound by residues Ser184, 217–220 (APGG), Asp236, Asp256, and Asp272. The active-site Proton acceptor is Lys301.

Belongs to the class I-like SAM-binding methyltransferase superfamily. RNA methyltransferase RlmE family. RlmM subfamily. As to quaternary structure, monomer.

Its subcellular location is the cytoplasm. The catalysed reaction is cytidine(2498) in 23S rRNA + S-adenosyl-L-methionine = 2'-O-methylcytidine(2498) in 23S rRNA + S-adenosyl-L-homocysteine + H(+). Catalyzes the 2'-O-methylation at nucleotide C2498 in 23S rRNA. This Pseudomonas aeruginosa (strain LESB58) protein is Ribosomal RNA large subunit methyltransferase M.